A 586-amino-acid chain; its full sequence is Glutathione S-transferase C-terminal domain-containing protein homolog (586 aa).

Residues 121-276 (LGFKESCLLA…GTCAKILGDL (156 aa)) form the GST C-terminal domain.

This sequence belongs to the GSTCD family.

This Drosophila pseudoobscura pseudoobscura (Fruit fly) protein is Glutathione S-transferase C-terminal domain-containing protein homolog.